Reading from the N-terminus, the 298-residue chain is Palmitoyl-protein thioesterase 1 (298 aa).

The first 16 residues, 1 to 16 (MRYFPLLLCLLAITTA), serve as a signal peptide directing secretion. Asn20 is a glycosylation site (N-linked (GlcNAc...) asparagine). 3 cysteine pairs are disulfide-bonded: Cys37-Cys38, Cys88-Cys120, and Cys144-Cys151. Ser107 (nucleophile) is an active-site residue. Asp224 is an active-site residue. Residue Asn250 is glycosylated (N-linked (GlcNAc...) asparagine). His280 is a catalytic residue.

The protein belongs to the palmitoyl-protein thioesterase family.

The enzyme catalyses S-hexadecanoyl-L-cysteinyl-[protein] + H2O = L-cysteinyl-[protein] + hexadecanoate + H(+). Removes thioester-linked fatty acyl groups such as palmitate (hexadecanoate) from modified cysteine residues in proteins or peptides. The polypeptide is Palmitoyl-protein thioesterase 1 (ppt-1) (Caenorhabditis elegans).